The following is a 266-amino-acid chain: Imidazole glycerol phosphate synthase subunit HisF (266 aa).

Active-site residues include D11 and D130.

It belongs to the HisA/HisF family. As to quaternary structure, heterodimer of HisH and HisF.

It is found in the cytoplasm. The enzyme catalyses 5-[(5-phospho-1-deoxy-D-ribulos-1-ylimino)methylamino]-1-(5-phospho-beta-D-ribosyl)imidazole-4-carboxamide + L-glutamine = D-erythro-1-(imidazol-4-yl)glycerol 3-phosphate + 5-amino-1-(5-phospho-beta-D-ribosyl)imidazole-4-carboxamide + L-glutamate + H(+). Its pathway is amino-acid biosynthesis; L-histidine biosynthesis; L-histidine from 5-phospho-alpha-D-ribose 1-diphosphate: step 5/9. IGPS catalyzes the conversion of PRFAR and glutamine to IGP, AICAR and glutamate. The HisF subunit catalyzes the cyclization activity that produces IGP and AICAR from PRFAR using the ammonia provided by the HisH subunit. The polypeptide is Imidazole glycerol phosphate synthase subunit HisF (Albidiferax ferrireducens (strain ATCC BAA-621 / DSM 15236 / T118) (Rhodoferax ferrireducens)).